The chain runs to 181 residues: Inner membrane-spanning protein YciB (181 aa).

5 consecutive transmembrane segments (helical) span residues 10-30, 50-70, 80-100, 118-138, and 148-168; these read LVIFFAVYKFFDIYIASGALI, MHLITFAMVSVFGSLTLILHD, IVYALFAIALAVSQFMNKPIL, VTWYWVLFFVVCGLVNIYVAF, and FKVFGLTALTLINTVLTVFYL.

This sequence belongs to the YciB family.

Its subcellular location is the cell inner membrane. Plays a role in cell envelope biogenesis, maintenance of cell envelope integrity and membrane homeostasis. This is Inner membrane-spanning protein YciB from Shewanella piezotolerans (strain WP3 / JCM 13877).